Reading from the N-terminus, the 254-residue chain is Phosphoglycerate mutase 1 (254 aa).

Residues 10 to 17 and 23 to 24 contribute to the substrate site; these read RHGESTWN and SG. His-11 serves as the catalytic Tele-phosphohistidine intermediate. Residues Ser-14 and Ser-23 each carry the phosphoserine modification. Tyr-26 is subject to Phosphotyrosine. Position 31 is a phosphoserine (Ser-31). Substrate is bound by residues Arg-62, 89-92, and Lys-100; that span reads ERHY. Glu-89 (proton donor/acceptor) is an active-site residue. Lys-106 is subject to N6-acetyllysine. 116–117 lines the substrate pocket; sequence RR. The residue at position 118 (Ser-118) is a Phosphoserine. 187-188 is a substrate binding site; that stretch reads GN. N6-acetyllysine; alternate is present on Lys-251. The residue at position 251 (Lys-251) is an N6-succinyllysine; alternate. Residues Lys-253 and Lys-254 each carry the N6-acetyllysine modification.

The protein belongs to the phosphoglycerate mutase family. BPG-dependent PGAM subfamily. In terms of assembly, homodimer. Acetylated at Lys-253, Lys-253 and Lys-254 under high glucose condition. Acetylation increases catalytic activity. Under glucose restriction SIRT1 levels dramatically increase and it deacetylates the enzyme.

It carries out the reaction (2R)-2-phosphoglycerate = (2R)-3-phosphoglycerate. The enzyme catalyses (2R)-3-phospho-glyceroyl phosphate = (2R)-2,3-bisphosphoglycerate + H(+). Functionally, catalyzes the interconversion of 2-phosphoglycerate and 3-phosphoglyceratea crucial step in glycolysis, by using 2,3-bisphosphoglycerate. Also catalyzes the interconversion of (2R)-2,3-bisphosphoglycerate and (2R)-3-phospho-glyceroyl phosphate. This chain is Phosphoglycerate mutase 1, found in Bos taurus (Bovine).